The primary structure comprises 412 residues: 43 kDa receptor-associated protein of the synapse (412 aa).

A lipid anchor (N-myristoyl glycine) is attached at G2. 7 TPR repeats span residues 6–39, 83–116, 123–156, 163–196, 206–239, 246–279, and 286–319; these read TKQQIEKGLQLYQSNQTEKALQVWTKVLEKSSDL, LESYLNLARSNEKLCEFHKTISYCKTCLGLPGTR, GQVSLSMGNAFLGLSVFQKALESFEKALRYAHNN, CRVCCSLGSFYAQVKDYEKALFFPCKAAELVNNY, AMSQYHMAVAYRLLGRLGSAMECCEESMKIALQH, ALCLLCFADIHRSRGDLETAFPRYDSAMSIMTEI, and VQALLGVAKCWVARKALDKALDAIERAQDLAEEV. Position 196 is a phosphotyrosine (Y196). The segment at 363-403 adopts an RING-type zinc-finger fold; sequence CGLCGESIGEKNSRLQALPCSHIFHLRCLQNNGTRSCPNCR. The residue at position 405 (S405) is a Phosphoserine.

Belongs to the RAPsyn family. Post-translationally, ubiquitinated by the BCR(KLHL8) complex, leading to its degradation.

It is found in the cell membrane. The protein resides in the postsynaptic cell membrane. The protein localises to the cytoplasm. It localises to the cytoskeleton. Functionally, postsynaptic protein required for clustering of nicotinic acetylcholine receptors (nAChRs) at the neuromuscular junction. It may link the receptor to the underlying postsynaptic cytoskeleton, possibly by direct association with actin or spectrin. The protein is 43 kDa receptor-associated protein of the synapse (RAPSN) of Homo sapiens (Human).